A 289-amino-acid polypeptide reads, in one-letter code: Diaminopimelate epimerase (289 aa).

The substrate site is built by asparagine 15 and asparagine 76. Cysteine 85 functions as the Proton donor in the catalytic mechanism. Substrate is bound by residues 86 to 87 (GN), asparagine 158, asparagine 191, and 209 to 210 (ER). Cysteine 218 serves as the catalytic Proton acceptor. 219–220 (GT) is a binding site for substrate.

The protein belongs to the diaminopimelate epimerase family. In terms of assembly, homodimer.

Its subcellular location is the cytoplasm. The catalysed reaction is (2S,6S)-2,6-diaminopimelate = meso-2,6-diaminopimelate. The protein operates within amino-acid biosynthesis; L-lysine biosynthesis via DAP pathway; DL-2,6-diaminopimelate from LL-2,6-diaminopimelate: step 1/1. In terms of biological role, catalyzes the stereoinversion of LL-2,6-diaminopimelate (L,L-DAP) to meso-diaminopimelate (meso-DAP), a precursor of L-lysine and an essential component of the bacterial peptidoglycan. In Streptomyces coelicolor (strain ATCC BAA-471 / A3(2) / M145), this protein is Diaminopimelate epimerase.